The primary structure comprises 2262 residues: Klarsicht protein (2262 aa).

Disordered stretches follow at residues 1 to 140 (MEMQ…VGND), 345 to 410 (QQQQ…GEGN), 442 to 475 (AANG…LNEV), 514 to 561 (QSQS…PDIG), 800 to 832 (ATSS…DKEN), 859 to 898 (SNYD…QLQM), 1000 to 1031 (HLPP…VSPV), 1115 to 1157 (PSCK…SEGF), 1246 to 1316 (SGLA…ELGG), and 1533 to 1670 (VRRK…QQSR). Residues 1 to 1774 (MEMQQENETG…KPTPELLDTE (1774 aa)) form a required for apical microtubules localization region. Over 1–2215 (MEMQQENETG…KRGWAWRIAR (2215 aa)) the chain is Cytoplasmic. Basic and acidic residues predominate over residues 58 to 67 (KIEHTTKPLK). Residues 131 to 140 (NYGTNSVGND) show a composition bias toward polar residues. Low complexity predominate over residues 345–402 (QQQQLSSQQPASLTSNCSSESTSESATKSSSLSSGFASDPVTTPIGTAAAAPPSSSTH). Over residues 446–475 (LDDDEDEEEDTEDDSFGYEGEATEDDLNEV) the composition is skewed to acidic residues. Over residues 514-525 (QSQSRSQQVPSQ) the composition is skewed to low complexity. Positions 546–560 (EADEELEEEDEDPDI) are enriched in acidic residues. Low complexity-rich tracts occupy residues 809–818 (STAVSSTTAT) and 859–881 (SNYD…SNSN). Residues 882 to 894 (GRLTETSATSRVT) are compositionally biased toward polar residues. Residues 1006–1018 (PAKSAKSTKSQAS) are compositionally biased toward low complexity. Polar residues predominate over residues 1019-1028 (NATVSGSTLV). Polar residues predominate over residues 1246 to 1259 (SGLASHSISESALD). Over residues 1267-1280 (PRAASSSGTGSNAA) the composition is skewed to low complexity. A compositionally biased stretch (basic residues) spans 1288 to 1299 (SLRRRKARKKRI). Positions 1550 to 1559 (QSDQQQQQLQ) are enriched in low complexity. A compositionally biased stretch (polar residues) spans 1560–1583 (VTPSLSASATALMTTPKNQSTSHQ). Basic and acidic residues-rich tracts occupy residues 1586–1596 (HRAESVGRKLD) and 1610–1640 (RTSE…EKCI). The stretch at 1809–1842 (LTKQERRLQSALEEQEQQQESEQLKQQKLVEEEK) forms a coiled coil. A disordered region spans residues 2092–2205 (HQQKQQIQQN…GEGADPAQTS (114 aa)). The segment covering 2093 to 2105 (QQKQQIQQNQTQQ) has biased composition (low complexity). Over residues 2130-2142 (RRGKGARKARQAK) the composition is skewed to basic residues. Residues 2207 to 2262 (RGWAWRIARAAVPMQVALFTIFCAACLMQPNCCDNLNNLSMSFTPQLRYIRGPPPI) enclose the KASH domain. The chain crosses the membrane as a helical; Anchor for type IV membrane protein span at residues 2216-2236 (AAVPMQVALFTIFCAACLMQP). The Perinuclear space portion of the chain corresponds to 2237–2262 (NCCDNLNNLSMSFTPQLRYIRGPPPI).

The protein belongs to the nesprin family. As to quaternary structure, core component of LINC complexes which are composed of inner nuclear membrane SUN domain-containing proteins coupled to outer nuclear membrane KASH domain-containing nesprins. Interacts with kud. Interacts with Msp300; this interaction allows the anchoring of Msp300 nuclear ring structure to the nuclear envelope. As to expression, expressed ubiquitously in the eye disk, but at much higher levels posterior to the morphogenetic furrow. Expressed in R-cells and also in non-neural cone cells.

The protein localises to the cytoplasm. The protein resides in the cytoskeleton. It localises to the microtubule organizing center. Its subcellular location is the perinuclear region. It is found in the nucleus membrane. The protein localises to the nucleus envelope. Component of the LINC (LInker of Nucleoskeleton and Cytoskeleton) complex involved in the connection between the nuclear lamina and the cytoskeleton. Plays a role in the nuclear positioning and links the nucleus to the microtubule organizing center (MTOC). Collaborates with Klar to promote even spacing of the myonuclei at the periphery of striated muscle fibers by mediating a tight association between a nuclear ring structure of Msp300 and the plus ends of a unique astral microtubule (MT) network. This Drosophila melanogaster (Fruit fly) protein is Klarsicht protein.